The sequence spans 53 residues: MGRQAEFWSESKNNSKIDGQPKAKARFASKRPNGTINTHPQERMRAANQQEEE.

Positions 1 to 53 are disordered; it reads MGRQAEFWSESKNNSKIDGQPKAKARFASKRPNGTINTHPQERMRAANQQEEE.

It belongs to the SspK family.

The protein resides in the spore core. This Bacillus cytotoxicus (strain DSM 22905 / CIP 110041 / 391-98 / NVH 391-98) protein is Small, acid-soluble spore protein K.